A 211-amino-acid polypeptide reads, in one-letter code: MILVLLGPPGSGKGTQGALLKSELSFEHISTGDMLRAEVSKKSPLGLKAEEYMKQGLLVPDDLIIAMIKNILTEAPHKNYVFDGFPRNVNQAEAFETMLNTMRLQVDKVFYFDLEDDVIIKRLSGRRVCPKCGATYNIYYQKPKNDTLCDNDATPLIQRDDDKEEVIVNRLRVYKEQTFPLIEYYKYKNKLFVVSADGTQEEVFEKLKSML.

Gly10–Thr15 contributes to the ATP binding site. The NMP stretch occupies residues Ser30–Val59. AMP-binding positions include Thr31, Arg36, Leu57–Val59, Gly84–Arg87, and Gln91. The tract at residues Gly125–Asp162 is LID. Arg126 contacts ATP. Residues Cys129 and Cys132 each coordinate Zn(2+). Thr135–Tyr136 contributes to the ATP binding site. Residues Cys149 and Asp152 each contribute to the Zn(2+) site. The AMP site is built by Arg159 and Arg170. Gly198 contributes to the ATP binding site.

The protein belongs to the adenylate kinase family. As to quaternary structure, monomer.

Its subcellular location is the cytoplasm. The catalysed reaction is AMP + ATP = 2 ADP. Its pathway is purine metabolism; AMP biosynthesis via salvage pathway; AMP from ADP: step 1/1. Functionally, catalyzes the reversible transfer of the terminal phosphate group between ATP and AMP. Plays an important role in cellular energy homeostasis and in adenine nucleotide metabolism. The sequence is that of Adenylate kinase from Hydrogenobaculum sp. (strain Y04AAS1).